A 156-amino-acid chain; its full sequence is Ribosomal RNA large subunit methyltransferase H (156 aa).

Residues Leu73, Gly104, and 123-128 each bind S-adenosyl-L-methionine; that span reads LSSLTL.

Belongs to the RNA methyltransferase RlmH family. In terms of assembly, homodimer.

Its subcellular location is the cytoplasm. It catalyses the reaction pseudouridine(1915) in 23S rRNA + S-adenosyl-L-methionine = N(3)-methylpseudouridine(1915) in 23S rRNA + S-adenosyl-L-homocysteine + H(+). Its function is as follows. Specifically methylates the pseudouridine at position 1915 (m3Psi1915) in 23S rRNA. The protein is Ribosomal RNA large subunit methyltransferase H of Bordetella bronchiseptica (strain ATCC BAA-588 / NCTC 13252 / RB50) (Alcaligenes bronchisepticus).